The following is a 177-amino-acid chain: Large ribosomal subunit protein uL5m (177 aa).

Belongs to the universal ribosomal protein uL5 family.

It localises to the mitochondrion. In Acanthamoeba castellanii (Amoeba), this protein is Large ribosomal subunit protein uL5m (RPL5).